A 363-amino-acid chain; its full sequence is MRLMISGGGTGGHIYPALALIDALKAHDPEAQVQFVGTHRGLESRIVPERGIDFKTIKIQGFKRSLSLQNVKTVYLFLKSVVTARKYIKAFKPDVVVGTGGYVSGAVVFAASQMHIPTVIHEQNSVVGVTNKFLSRFVDKIAISFESARSQFPAQKVVMTGNPRAQQVANIKKSGALAQFDLDPDIPTALIFGGSRGAARINAAAVAAIPELNKRDYQTLFVTGQVHYEKIRNGLSATALAPNVKIEPYIKNMPAILPEVAVILGRAGATSIAEITALGIPSILVPSPYVTNDHQTKNAQSLVNAGAAELIKEADLTGTSLVAALDGLLQSTTHRETMAANAKKLGMPDAADQLLHVLETVIK.

Residues 10–12 (TGG), N124, S195, I250, and Q295 contribute to the UDP-N-acetyl-alpha-D-glucosamine site.

This sequence belongs to the glycosyltransferase 28 family. MurG subfamily.

Its subcellular location is the cell membrane. The catalysed reaction is Mur2Ac(oyl-L-Ala-gamma-D-Glu-L-Lys-D-Ala-D-Ala)-di-trans,octa-cis-undecaprenyl diphosphate + UDP-N-acetyl-alpha-D-glucosamine = beta-D-GlcNAc-(1-&gt;4)-Mur2Ac(oyl-L-Ala-gamma-D-Glu-L-Lys-D-Ala-D-Ala)-di-trans,octa-cis-undecaprenyl diphosphate + UDP + H(+). It functions in the pathway cell wall biogenesis; peptidoglycan biosynthesis. In terms of biological role, cell wall formation. Catalyzes the transfer of a GlcNAc subunit on undecaprenyl-pyrophosphoryl-MurNAc-pentapeptide (lipid intermediate I) to form undecaprenyl-pyrophosphoryl-MurNAc-(pentapeptide)GlcNAc (lipid intermediate II). This chain is UDP-N-acetylglucosamine--N-acetylmuramyl-(pentapeptide) pyrophosphoryl-undecaprenol N-acetylglucosamine transferase, found in Lactiplantibacillus plantarum (strain ATCC BAA-793 / NCIMB 8826 / WCFS1) (Lactobacillus plantarum).